We begin with the raw amino-acid sequence, 294 residues long: C-type lectin domain family 4 member G (294 aa).

Over 1–30 (MNTGEYNKLGSAIEEVSRGQLGRWECYKQR) the chain is Cytoplasmic. Residues 31–51 (LFFLVLALLVATVLWALILST) traverse the membrane as a helical; Signal-anchor for type II membrane protein segment. At 52-294 (LLSSASSKLR…WICEKRSSCY (243 aa)) the chain is on the extracellular side. Residue Asn73 is glycosylated (N-linked (GlcNAc...) asparagine). The stretch at 100–151 (AQLQTTLAEFKDIQAKLMEQESILKELQERVTQDLAKASRDRENIRSELFQA) forms a coiled coil. N-linked (GlcNAc...) asparagine glycosylation is found at Asn159, Asn246, and Asn256. A C-type lectin domain is found at 172–287 (FQGSCYYFSE…CTNERDGWIC (116 aa)). An intrachain disulfide couples Cys264 to Cys278.

It localises to the cell membrane. Binds mannose, N-acetylglucosamine (GlcNAc) and fucose, but not galactose, in a Ca(2+)-dependent manner. This is C-type lectin domain family 4 member G (Clec4g) from Mus musculus (Mouse).